Reading from the N-terminus, the 224-residue chain is Germin-like protein 8-5 (224 aa).

The first 22 residues, 1–22 (MASPSSLCLLAALALISWQAMA), serve as a signal peptide directing secretion. An intrachain disulfide couples Cys32 to Cys47. One can recognise a Cupin type-1 domain in the interval 62–212 (AKLDTPRKTN…AFQVEKGTID (151 aa)). An N-linked (GlcNAc...) asparagine glycan is attached at Asn76. The Mn(2+) site is built by His109, His111, and Glu116. N-linked (GlcNAc...) asparagine glycosylation is present at Asn135. His157 is a Mn(2+) binding site.

Belongs to the germin family. Oligomer (believed to be a pentamer but probably hexamer).

It localises to the secreted. The protein localises to the extracellular space. The protein resides in the apoplast. Functionally, plays a role in broad-spectrum disease resistance. Probably has no oxalate oxidase activity even if the active site is conserved. This chain is Germin-like protein 8-5, found in Oryza sativa subsp. japonica (Rice).